Consider the following 216-residue polypeptide: uncharacterized protein (216 aa).

Residues 5–25 (YVKALVAVTVALGVLLPSTIS) form a helical membrane-spanning segment. 2 stretches are compositionally biased toward low complexity: residues 28 to 67 (KSFS…SSSS) and 89 to 108 (KASS…ATSK). The disordered stretch occupies residues 28–115 (KSFSGRSSSS…TSKVTGKTYS (88 aa)). Helical transmembrane passes span 137-157 (GFAP…MFMI) and 183-203 (IAWI…IALI).

Its subcellular location is the cell membrane. This is an uncharacterized protein from Bacillus subtilis (strain 168).